A 728-amino-acid chain; its full sequence is Polyribonucleotide nucleotidyltransferase (728 aa).

Mg(2+) contacts are provided by D513 and D519. The 61-residue stretch at 580-640 folds into the KH domain; the sequence is PKVKMILIKP…EIVDLTVTYI (61 aa). The region spanning 650–724 is the S1 motif domain; sequence ENVYEVKILR…ERGQIDLSKK (75 aa).

This sequence belongs to the polyribonucleotide nucleotidyltransferase family. Mg(2+) is required as a cofactor.

It is found in the cytoplasm. The catalysed reaction is RNA(n+1) + phosphate = RNA(n) + a ribonucleoside 5'-diphosphate. Its function is as follows. Involved in mRNA degradation. Catalyzes the phosphorolysis of single-stranded polyribonucleotides processively in the 3'- to 5'-direction. In Phytoplasma mali (strain AT), this protein is Polyribonucleotide nucleotidyltransferase.